The following is a 274-amino-acid chain: NADPH-dependent 7-cyano-7-deazaguanine reductase (274 aa).

Substrate is bound at residue 81–83; the sequence is IES. 83 to 84 is a binding site for NADPH; it reads SK. Catalysis depends on Cys182, which acts as the Thioimide intermediate. Asp189 acts as the Proton donor in catalysis. Substrate is bound at residue 221 to 222; the sequence is HE. 250 to 251 serves as a coordination point for NADPH; sequence RG.

It belongs to the GTP cyclohydrolase I family. QueF type 2 subfamily. As to quaternary structure, homodimer.

The protein resides in the cytoplasm. The catalysed reaction is 7-aminomethyl-7-carbaguanine + 2 NADP(+) = 7-cyano-7-deazaguanine + 2 NADPH + 3 H(+). It functions in the pathway tRNA modification; tRNA-queuosine biosynthesis. Catalyzes the NADPH-dependent reduction of 7-cyano-7-deazaguanine (preQ0) to 7-aminomethyl-7-deazaguanine (preQ1). This Hahella chejuensis (strain KCTC 2396) protein is NADPH-dependent 7-cyano-7-deazaguanine reductase.